A 421-amino-acid polypeptide reads, in one-letter code: MEKMHITNQEHDAFVKSHPNGDLLQLTKWAETKKLTGWYARRIAVGRDGEVQGVAQLLFKKVPKLPYTLCYISRGFVVDYSNKEALNALLDSAKEIAKAEKAYAIKIDPDVEVDKGTDALQNLKALGFKHKGFKEGLSKDYIQPRMTMITPIDKNDDELLNSFERRNRSKVRLALKRGTTVERSDREGLKTFAELMKITGERDGFLTRDISYFENIYDALHEDGDAELFLVKLDPKENIAKVNQELNELHAEIAKWQQKMETSEKQAKKAQNMINDAQNKIAKNEDLKRDLEALEKEHPEGIYLSGALLMFAGSKSYYLYGASSNEFRDFLPNHHMQYTMMKYAREHGATTYDFGGTDNDPDKDSEHYGLWAFKKVWGTYLSEKIGEFDYILNQPLYQLIEQVKPRLTKAKIKISRKLKRK.

The protein belongs to the FemABX family. Monomer.

The protein localises to the cytoplasm. The enzyme catalyses beta-D-GlcNAc-(1-&gt;4)-Mur2Ac(oyl-L-Ala-D-isoglutaminyl-L-Lys-D-Ala-D-Ala)-di-trans,octa-cis-undecaprenyl diphosphate + glycyl-tRNA(Gly) = beta-D-GlcNAc-(1-&gt;4)-Mur2Ac(oyl-L-Ala-D-isoglutaminyl-L-Lys-(N(6)-Gly)-D-Ala-D-Ala)-di-trans,octa-cis-undecaprenyl diphosphate + tRNA(Gly) + H(+). Catalyzes the incorporation of the first glycine of the pentaglycine interpeptide bridge, which is characteristic of the S.aureus peptidoglycan. This glycine is added to the epsilon-amino group of the L-lysine of the membrane-bound lipid II intermediate (GlcNAc-(beta-1,4)-N-acetylmuramic acid(-L-Ala-D-iGln-L-Lys-D-Ala-D-Ala)-pyrophosphoryl-undecaprenol), using glycyl-tRNA(Gly) as donor, in a ribosome-independent mechanism. Involved in methicillin resistance. This is Lipid II:glycine glycyltransferase (femX) from Staphylococcus aureus (strain Mu50 / ATCC 700699).